Here is a 43-residue protein sequence, read N- to C-terminus: Neurotrophin-4 (43 aa).

It belongs to the NGF-beta family.

Functionally, NT-4 could play a role in oogenesis and/or early embryogenesis. NT-4 interacts with the low affinity NGF receptor and elicits neurite outgrowth from explanted dorsal root ganglia with no and lower activity in sympathetic and nodose ganglia, respectively. In Macrovipera lebetinus (Levantine viper), this protein is Neurotrophin-4 (NTF4).